Reading from the N-terminus, the 147-residue chain is Protein Turandot Z (147 aa).

Positions 1–23 (MYFAIRLSFVLAVLICLTGNGSA) are cleaved as a signal peptide.

This sequence belongs to the Turandot family.

It localises to the secreted. Its function is as follows. A humoral factor that may play a role in stress tolerance. This chain is Protein Turandot Z, found in Drosophila melanogaster (Fruit fly).